The sequence spans 361 residues: tRNA/tmRNA (uracil-C(5))-methyltransferase (361 aa).

Positions 185, 213, 218, 234, and 294 each coordinate S-adenosyl-L-methionine. The Nucleophile role is filled by Cys319. Glu353 acts as the Proton acceptor in catalysis.

The protein belongs to the class I-like SAM-binding methyltransferase superfamily. RNA M5U methyltransferase family. TrmA subfamily.

The catalysed reaction is uridine(54) in tRNA + S-adenosyl-L-methionine = 5-methyluridine(54) in tRNA + S-adenosyl-L-homocysteine + H(+). The enzyme catalyses uridine(341) in tmRNA + S-adenosyl-L-methionine = 5-methyluridine(341) in tmRNA + S-adenosyl-L-homocysteine + H(+). Dual-specificity methyltransferase that catalyzes the formation of 5-methyluridine at position 54 (m5U54) in all tRNAs, and that of position 341 (m5U341) in tmRNA (transfer-mRNA). This Pseudomonas putida (strain ATCC 700007 / DSM 6899 / JCM 31910 / BCRC 17059 / LMG 24140 / F1) protein is tRNA/tmRNA (uracil-C(5))-methyltransferase.